A 98-amino-acid polypeptide reads, in one-letter code: uncharacterized protein (98 aa).

This is an uncharacterized protein from Human cytomegalovirus (strain AD169) (HHV-5).